Here is a 403-residue protein sequence, read N- to C-terminus: Soluble calcium-activated nucleotidase 1 (403 aa).

Residues Met-1 to Arg-44 are Cytoplasmic-facing. The helical; Signal-anchor for type II membrane protein transmembrane segment at Val-45–Ser-61 threads the bilayer. Residues His-62–Ile-403 lie on the Lumenal side of the membrane. An N-linked (GlcNAc...) asparagine glycan is attached at Asn-90. Ca(2+)-binding residues include Ser-170, Asp-171, Glu-217, Glu-286, Ser-347, and Glu-398.

The protein belongs to the apyrase family. Monomer. Homodimer; dimerization is Ca(2+)-dependent. The cofactor is Ca(2+). In terms of tissue distribution, detected in intestine, thymus, heart, lung, spleen, kidney, liver, testis, skeletal muscle and brain.

The protein localises to the endoplasmic reticulum membrane. The protein resides in the golgi apparatus. It is found in the golgi stack membrane. The enzyme catalyses a ribonucleoside 5'-diphosphate + H2O = a ribonucleoside 5'-phosphate + phosphate + H(+). Calcium-dependent nucleotidase with a preference for UDP. The order of activity with different substrates is UDP &gt; GDP &gt; IDP &gt;&gt; UTP &gt; CDP = GTP = ITP. Has very low activity towards ADP and even lower activity towards ATP. Does not hydrolyze AMP and GMP. Involved in proteoglycan synthesis. This chain is Soluble calcium-activated nucleotidase 1 (Cant1), found in Rattus norvegicus (Rat).